The following is a 140-amino-acid chain: Putative pre-16S rRNA nuclease (140 aa).

The protein belongs to the YqgF nuclease family.

It is found in the cytoplasm. In terms of biological role, could be a nuclease involved in processing of the 5'-end of pre-16S rRNA. The polypeptide is Putative pre-16S rRNA nuclease (Yersinia pseudotuberculosis serotype O:1b (strain IP 31758)).